The sequence spans 545 residues: Aclacinomycin-N/aclacinomycin-A oxidase (545 aa).

Residues 1–43 constitute a signal peptide (tat-type signal); sequence MFVLNEFTRRGFLGTAAAVGGTTVVTTALGGAPAAQAAVPEAA. An FAD-binding PCMH-type domain is found at 76-256; sequence FRGRPDVVYV…TRYWFRTPGA (181 aa). Residues 113–173 constitute a cross-link (6-(S-cysteinyl)-8alpha-(pros-histidyl)-FAD (His-Cys)); that stretch reads HCFEGFVDDP…WGVTIPAGVC (61 aa). Residue Tyr421 is the Proton acceptor of the active site. An aclacinomycin Y-binding site is contributed by Thr451. An FAD-binding site is contributed by Asn492. The active-site Proton acceptor is Tyr493. An aclacinomycin Y-binding site is contributed by Tyr493.

This sequence belongs to the oxygen-dependent FAD-linked oxidoreductase family. Homotetramer; dimer of dimers. The cofactor is FAD. Predicted to be exported by the Tat system. The position of the signal peptide cleavage has been experimentally proven. In terms of processing, the FAD cofactor is bound via a bicovalent 6-S-cysteinyl, 8alpha-N1-histidyl FAD linkage.

It carries out the reaction aclacinomycin N + O2 = aclacinomycin A + H2O2. The catalysed reaction is aclacinomycin A + O2 = aclacinomycin Y + H2O2. Its activity is regulated as follows. Inhibited by ascorbic acid and iron ion. Functionally, involved in the modification of the terminal sugar residues in the last two steps in the biosynthesis of polyketide antibiotics of the aclacinomycin group. In the first reaction, it catalyzes the oxidation of the hydroxyl group at carbon C4 of the L-rhodinose terminal sugar moiety of aclacinomycin N (AclN) to a keto group, modifying the sugar to cinerulose A and generating aclacinomycin A (AclA). In the second reaction, it catalyzes the elimination of two hydrogen atoms from cinerulose A, leading to a double bond between carbon atoms C2 and C3 and the generation of the L-aculose terminal sugar moiety of aclacinomycin Y (AclY). It can also use aclacinomycin analogs, epsilon-pyrromycinone glycosides, rhodirubins (A, B, C and E) and all triglycosides containing L-cinerulose, L-rhodinose or 2-deoxy-L-fucose as terminal sugar. The protein is Aclacinomycin-N/aclacinomycin-A oxidase of Streptomyces galilaeus.